The chain runs to 92 residues: Small ribosomal subunit protein uS19 (92 aa).

Belongs to the universal ribosomal protein uS19 family.

Protein S19 forms a complex with S13 that binds strongly to the 16S ribosomal RNA. The polypeptide is Small ribosomal subunit protein uS19 (Bartonella henselae (strain ATCC 49882 / DSM 28221 / CCUG 30454 / Houston 1) (Rochalimaea henselae)).